We begin with the raw amino-acid sequence, 329 residues long: Probable carboxylesterase 13 (329 aa).

Methionine 1 is modified (N-acetylmethionine). Positions 81 to 83 (HGG) match the Involved in the stabilization of the negatively charged intermediate by the formation of the oxyanion hole motif. Catalysis depends on residues serine 165, aspartate 269, and histidine 302.

The protein belongs to the 'GDXG' lipolytic enzyme family. In terms of tissue distribution, expressed in flowers.

The catalysed reaction is a carboxylic ester + H2O = an alcohol + a carboxylate + H(+). Functionally, carboxylesterase acting on esters with varying acyl chain length. This chain is Probable carboxylesterase 13 (CXE13), found in Arabidopsis thaliana (Mouse-ear cress).